We begin with the raw amino-acid sequence, 324 residues long: Acetyl-coenzyme A carboxylase carboxyl transferase subunit alpha (324 aa).

The 255-residue stretch at 37 to 291 (ILEDKLENLE…DLMLRKTFEQ (255 aa)) folds into the CoA carboxyltransferase C-terminal domain.

Belongs to the AccA family. As to quaternary structure, acetyl-CoA carboxylase is a heterohexamer composed of biotin carboxyl carrier protein (AccB), biotin carboxylase (AccC) and two subunits each of ACCase subunit alpha (AccA) and ACCase subunit beta (AccD).

The protein resides in the cytoplasm. The catalysed reaction is N(6)-carboxybiotinyl-L-lysyl-[protein] + acetyl-CoA = N(6)-biotinyl-L-lysyl-[protein] + malonyl-CoA. Its pathway is lipid metabolism; malonyl-CoA biosynthesis; malonyl-CoA from acetyl-CoA: step 1/1. Functionally, component of the acetyl coenzyme A carboxylase (ACC) complex. First, biotin carboxylase catalyzes the carboxylation of biotin on its carrier protein (BCCP) and then the CO(2) group is transferred by the carboxyltransferase to acetyl-CoA to form malonyl-CoA. The protein is Acetyl-coenzyme A carboxylase carboxyl transferase subunit alpha of Bacillus cereus (strain Q1).